The primary structure comprises 154 residues: 3-hydroxyacyl-[acyl-carrier-protein] dehydratase FabZ (154 aa).

H54 is a catalytic residue.

Belongs to the thioester dehydratase family. FabZ subfamily.

Its subcellular location is the cytoplasm. It carries out the reaction a (3R)-hydroxyacyl-[ACP] = a (2E)-enoyl-[ACP] + H2O. In terms of biological role, involved in unsaturated fatty acids biosynthesis. Catalyzes the dehydration of short chain beta-hydroxyacyl-ACPs and long chain saturated and unsaturated beta-hydroxyacyl-ACPs. This Shewanella oneidensis (strain ATCC 700550 / JCM 31522 / CIP 106686 / LMG 19005 / NCIMB 14063 / MR-1) protein is 3-hydroxyacyl-[acyl-carrier-protein] dehydratase FabZ.